Reading from the N-terminus, the 484-residue chain is Aspartyl/glutamyl-tRNA(Asn/Gln) amidotransferase subunit B (484 aa).

It belongs to the GatB/GatE family. GatB subfamily. In terms of assembly, heterotrimer of A, B and C subunits.

It carries out the reaction L-glutamyl-tRNA(Gln) + L-glutamine + ATP + H2O = L-glutaminyl-tRNA(Gln) + L-glutamate + ADP + phosphate + H(+). The enzyme catalyses L-aspartyl-tRNA(Asn) + L-glutamine + ATP + H2O = L-asparaginyl-tRNA(Asn) + L-glutamate + ADP + phosphate + 2 H(+). Allows the formation of correctly charged Asn-tRNA(Asn) or Gln-tRNA(Gln) through the transamidation of misacylated Asp-tRNA(Asn) or Glu-tRNA(Gln) in organisms which lack either or both of asparaginyl-tRNA or glutaminyl-tRNA synthetases. The reaction takes place in the presence of glutamine and ATP through an activated phospho-Asp-tRNA(Asn) or phospho-Glu-tRNA(Gln). This Bordetella pertussis (strain Tohama I / ATCC BAA-589 / NCTC 13251) protein is Aspartyl/glutamyl-tRNA(Asn/Gln) amidotransferase subunit B.